The sequence spans 397 residues: Troponin T, skeletal muscle (397 aa).

Acidic residues predominate over residues 1–16 (MSDDEEYTSSEEEEVV). Disordered stretches follow at residues 1–148 (MSDD…NFTI), 234–261 (ERQK…YPPK), and 294–397 (DSNE…EEEE). 3 stretches are compositionally biased toward basic and acidic residues: residues 37–77 (EFIK…LKEK), 84–129 (TRAE…EKKR), and 136–148 (MKDK…NFTI). Basic and acidic residues-rich tracts occupy residues 294-307 (DSNE…KEQY) and 319-329 (FGERPGKKAGE). Residues 331–397 (ETPEGEEDAK…EEEEEEEEEE (67 aa)) show a composition bias toward acidic residues.

Belongs to the troponin T family. Post-translationally, some glutamate residues are polyglycylated by TTLL3B. This modification occurs exclusively on glutamate residues and results in polyglycine chains on the gamma-carboxyl group. Isoform 3 is expressed in the hypoderm. Isoform 8 is expressed in the dorsal vessel. Isoform 6 is expressed in adult TDT muscle and isoform 9 in adult IFM, flight and jump muscles.

Functionally, troponin T is the tropomyosin-binding subunit of troponin, the thin filament regulatory complex which confers calcium-sensitivity to striated muscle actomyosin ATPase activity. In Drosophila melanogaster (Fruit fly), this protein is Troponin T, skeletal muscle (up).